The following is a 318-amino-acid chain: Aspartate carbamoyltransferase catalytic subunit (318 aa).

Residues Arg-64 and Thr-65 each contribute to the carbamoyl phosphate site. L-aspartate is bound at residue Lys-92. 3 residues coordinate carbamoyl phosphate: Arg-114, His-142, and Gln-145. L-aspartate contacts are provided by Arg-175 and Arg-229. Residues Gly-270 and Pro-271 each coordinate carbamoyl phosphate.

The protein belongs to the aspartate/ornithine carbamoyltransferase superfamily. ATCase family. As to quaternary structure, heterododecamer (2C3:3R2) of six catalytic PyrB chains organized as two trimers (C3), and six regulatory PyrI chains organized as three dimers (R2).

It catalyses the reaction carbamoyl phosphate + L-aspartate = N-carbamoyl-L-aspartate + phosphate + H(+). It participates in pyrimidine metabolism; UMP biosynthesis via de novo pathway; (S)-dihydroorotate from bicarbonate: step 2/3. Functionally, catalyzes the condensation of carbamoyl phosphate and aspartate to form carbamoyl aspartate and inorganic phosphate, the committed step in the de novo pyrimidine nucleotide biosynthesis pathway. This Rhodospirillum centenum (strain ATCC 51521 / SW) protein is Aspartate carbamoyltransferase catalytic subunit.